The primary structure comprises 148 residues: MEVILREDIENLGTRGQLVKVAPGYARNFLLPKRMAVAATEANRKIVEQERQAHLRKETKIKGEAEELAKIMTGVTVRISQKAGENDQLFGSVTSKDIADALTAQNYNIDRRKIQLDEPIKTLGEFKIPVRLYKDVVAEITVIVAKEE.

The protein belongs to the bacterial ribosomal protein bL9 family.

Functionally, binds to the 23S rRNA. The protein is Large ribosomal subunit protein bL9 of Solibacter usitatus (strain Ellin6076).